The sequence spans 124 residues: Large ribosomal subunit protein bL12 (124 aa).

The protein belongs to the bacterial ribosomal protein bL12 family. In terms of assembly, homodimer. Part of the ribosomal stalk of the 50S ribosomal subunit. Forms a multimeric L10(L12)X complex, where L10 forms an elongated spine to which 2 to 4 L12 dimers bind in a sequential fashion. Binds GTP-bound translation factors.

Its function is as follows. Forms part of the ribosomal stalk which helps the ribosome interact with GTP-bound translation factors. Is thus essential for accurate translation. This Burkholderia cenocepacia (strain HI2424) protein is Large ribosomal subunit protein bL12.